A 278-amino-acid chain; its full sequence is Hydroxyethylthiazole kinase (278 aa).

Substrate is bound at residue Met48. Positions 124 and 175 each coordinate ATP. Gly202 serves as a coordination point for substrate.

This sequence belongs to the Thz kinase family. Mg(2+) is required as a cofactor.

It carries out the reaction 5-(2-hydroxyethyl)-4-methylthiazole + ATP = 4-methyl-5-(2-phosphooxyethyl)-thiazole + ADP + H(+). Its pathway is cofactor biosynthesis; thiamine diphosphate biosynthesis; 4-methyl-5-(2-phosphoethyl)-thiazole from 5-(2-hydroxyethyl)-4-methylthiazole: step 1/1. Catalyzes the phosphorylation of the hydroxyl group of 4-methyl-5-beta-hydroxyethylthiazole (THZ). This chain is Hydroxyethylthiazole kinase, found in Clostridium botulinum (strain Eklund 17B / Type B).